Reading from the N-terminus, the 123-residue chain is Histone H2B (123 aa).

Positions 1–31 are disordered; it reads MPPKVASKGAKKAASKAKAARSGEKKKKRRR. Over residues 9–31 the composition is skewed to basic residues; that stretch reads GAKKAASKAKAARSGEKKKKRRR. O-linked (GlcNAc) serine glycosylation occurs at S110. K118 participates in a covalent cross-link: Glycyl lysine isopeptide (Lys-Gly) (interchain with G-Cter in ubiquitin).

It belongs to the histone H2B family. In terms of assembly, the nucleosome is a histone octamer containing two molecules each of H2A, H2B, H3 and H4 assembled in one H3-H4 heterotetramer and two H2A-H2B heterodimers. The octamer wraps approximately 147 bp of DNA. Monoubiquitination of Lys-118 gives a specific tag for epigenetic transcriptional activation and is also prerequisite for histone H3 'Lys-4' and 'Lys-79' methylation. In terms of processing, glcNAcylation at Ser-110 promotes monoubiquitination of Lys-118. It fluctuates in response to extracellular glucose, and associates with transcribed genes.

The protein localises to the nucleus. Its subcellular location is the chromosome. Its function is as follows. Core component of nucleosome. Nucleosomes wrap and compact DNA into chromatin, limiting DNA accessibility to the cellular machineries which require DNA as a template. Histones thereby play a central role in transcription regulation, DNA repair, DNA replication and chromosomal stability. DNA accessibility is regulated via a complex set of post-translational modifications of histones, also called histone code, and nucleosome remodeling. The sequence is that of Histone H2B from Platynereis dumerilii (Dumeril's clam worm).